Consider the following 284-residue polypeptide: Pseudopaline exporter CntI (284 aa).

10 helical membrane passes run 2-22 (VLDL…TFSV), 34-54 (LPAA…IYLL), 74-94 (GVMG…IPLA), 96-116 (ASIL…LFLG), 122-142 (AVYW…KPFS), 147-167 (SVYA…SVAI), 179-199 (IVFY…WSDF), 209-229 (GLLL…TRAF), 236-256 (IVAV…WLFW), and 259-279 (VPDA…IALS). EamA domains are found at residues 8-138 (SGVL…LMIV) and 151-279 (VVGL…IALS).

The protein belongs to the EamA transporter family.

It localises to the cell inner membrane. Transports the metallophore pseudopaline, which is involved in the acquisition of nickel and zinc, and thus enables bacterial growth inside the host, where metal access is limited. Is probably involved in the export of pseudopaline. This is Pseudopaline exporter CntI from Pseudomonas aeruginosa (strain UCBPP-PA14).